Here is a 212-residue protein sequence, read N- to C-terminus: Large ribosomal subunit protein uL3 (212 aa).

Residue Q152 is modified to N5-methylglutamine.

It belongs to the universal ribosomal protein uL3 family. Part of the 50S ribosomal subunit. Forms a cluster with proteins L14 and L19. In terms of processing, methylated by PrmB.

Its function is as follows. One of the primary rRNA binding proteins, it binds directly near the 3'-end of the 23S rRNA, where it nucleates assembly of the 50S subunit. The polypeptide is Large ribosomal subunit protein uL3 (Marinomonas sp. (strain MWYL1)).